The sequence spans 2841 residues: Neurofibromin (2841 aa).

Alanine 2 carries the post-translational modification N-acetylalanine. Serine 866 and serine 878 each carry phosphoserine. One can recognise a Ras-GAP domain in the interval 1253-1484 (HLLYQLLWNM…DLARRFFLDI (232 aa)). The 159-residue stretch at 1582–1740 (EKEEFKALKT…ATLALEEDLK (159 aa)) folds into the CRAL-TRIO domain. The segment at 1582-1839 (EKEEFKALKT…RTRWELSQPD (258 aa)) is lipid binding. Serine 2190 and serine 2469 each carry phosphoserine. Threonine 2516 is modified (phosphothreonine). 4 positions are modified to phosphoserine: serine 2517, serine 2523, serine 2525, and serine 2545. The Bipartite nuclear localization signal motif lies at 2557–2573 (KRQEMESGITTPPKMRR). Residue threonine 2567 is modified to Phosphothreonine. A phosphoserine mark is found at serine 2599, serine 2804, and serine 2819. The tract at residues 2786–2841 (SLATSQHSPGLDKENVELSPTAGHCNSGRTRHGSASQVQKQRSAGSFKRNSIKKIV) is disordered. The span at 2818-2829 (GSASQVQKQRSA) shows a compositional bias: polar residues.

In terms of assembly, interacts with HTR6. Interacts with SPRED2. Post-translationally, ubiquitinated by RNF7/RBX2, leading to its degradation. Expressed predominantly in brain, spinal cord and testis. As to expression, expressed predominantly in adrenal gland, kidney, ovary and lung. In terms of tissue distribution, widely and more weakly expressed. Predominantly expressed in adrenal gland. Widely and more weakly expressed. Expressed mainly in testis.

Its subcellular location is the nucleus. The protein localises to the nucleolus. It is found in the cell membrane. Its function is as follows. Stimulates the GTPase activity of Ras. NF1 shows greater affinity for Ras GAP, but lower specific activity. May be a regulator of Ras activity. The chain is Neurofibromin (Nf1) from Mus musculus (Mouse).